The chain runs to 360 residues: Geranylgeranyl pyrophosphate synthase 12, chloroplastic (360 aa).

The transit peptide at 1 to 39 (MANTVHLSSSSLFIQTRGRKYNSILSFNNLQKRTVLSLS) directs the protein to the chloroplast. Isopentenyl diphosphate is bound by residues K106, R109, and H138. The Mg(2+) site is built by D145 and D151. R156 contributes to the dimethylallyl diphosphate binding site. R157 contacts isopentenyl diphosphate. The dimethylallyl diphosphate site is built by K245, T246, Q283, K300, and K310.

The protein belongs to the FPP/GGPP synthase family. Monomer. Mg(2+) serves as cofactor.

It localises to the plastid. Its subcellular location is the chloroplast. The catalysed reaction is isopentenyl diphosphate + dimethylallyl diphosphate = (2E)-geranyl diphosphate + diphosphate. The enzyme catalyses isopentenyl diphosphate + (2E)-geranyl diphosphate = (2E,6E)-farnesyl diphosphate + diphosphate. It carries out the reaction isopentenyl diphosphate + (2E,6E)-farnesyl diphosphate = (2E,6E,10E)-geranylgeranyl diphosphate + diphosphate. The protein operates within isoprenoid biosynthesis; farnesyl diphosphate biosynthesis; farnesyl diphosphate from geranyl diphosphate and isopentenyl diphosphate: step 1/1. It participates in isoprenoid biosynthesis; geranyl diphosphate biosynthesis; geranyl diphosphate from dimethylallyl diphosphate and isopentenyl diphosphate: step 1/1. It functions in the pathway isoprenoid biosynthesis; geranylgeranyl diphosphate biosynthesis; geranylgeranyl diphosphate from farnesyl diphosphate and isopentenyl diphosphate: step 1/1. Its function is as follows. Catalyzes the trans-addition of the three molecules of IPP onto DMAPP to form geranylgeranyl pyrophosphate. This Arabidopsis thaliana (Mouse-ear cress) protein is Geranylgeranyl pyrophosphate synthase 12, chloroplastic.